Consider the following 620-residue polypeptide: Glutathione-regulated potassium-efflux system protein KefC (620 aa).

Transmembrane regions (helical) follow at residues H4 to V24, L26 to L46, S54 to L74, G90 to L110, V114 to M134, F149 to L169, L178 to L198, V218 to G238, G270 to V290, L294 to V314, W327 to Q347, and A359 to T379. An RCK N-terminal domain is found at Q399–T518. Positions Q599 to I620 are disordered.

The protein belongs to the monovalent cation:proton antiporter 2 (CPA2) transporter (TC 2.A.37) family. KefC subfamily. As to quaternary structure, homodimer. Interacts with the regulatory subunit KefF.

It localises to the cell inner membrane. Pore-forming subunit of a potassium efflux system that confers protection against electrophiles. Catalyzes K(+)/H(+) antiport. The chain is Glutathione-regulated potassium-efflux system protein KefC from Salmonella agona (strain SL483).